A 649-amino-acid polypeptide reads, in one-letter code: ATP-dependent zinc metalloprotease FtsH (649 aa).

The Cytoplasmic portion of the chain corresponds to 1 to 18 (MQCSYPLARQLERSSALN). A helical membrane pass occupies residues 19 to 39 (NNLFQKAAIWLVIALVLFTVF). The Periplasmic portion of the chain corresponds to 40 to 115 (KQFDKPRAQD…VTGKADDEPN (76 aa)). Residues 116–136 (VLVQALYYLGPTLLIIVFWFY) traverse the membrane as a helical segment. Over 137-649 (MMRQMQGGGK…PATARADETV (513 aa)) the chain is Cytoplasmic. 210–217 (GPPGTGKT) provides a ligand contact to ATP. Residue His-432 participates in Zn(2+) binding. The active site involves Glu-433. Zn(2+)-binding residues include His-436 and Asp-508. The interval 606–649 (IMAGRPPRPPRGAQGPNSGGNTPPGGSPVAPTNAPATARADETV) is disordered. Positions 616-626 (RGAQGPNSGGN) are enriched in low complexity.

This sequence in the central section; belongs to the AAA ATPase family. It in the C-terminal section; belongs to the peptidase M41 family. Homohexamer. It depends on Zn(2+) as a cofactor.

The protein resides in the cell inner membrane. Its function is as follows. Acts as a processive, ATP-dependent zinc metallopeptidase for both cytoplasmic and membrane proteins. Plays a role in the quality control of integral membrane proteins. The chain is ATP-dependent zinc metalloprotease FtsH from Cupriavidus metallidurans (strain ATCC 43123 / DSM 2839 / NBRC 102507 / CH34) (Ralstonia metallidurans).